A 260-amino-acid polypeptide reads, in one-letter code: Repetitive secreted protein 1 (260 aa).

The signal sequence occupies residues 1-20 (MKLSFTIVATAALVASCTFA).

Post-translationally, rsp1 is processed by the subtilisin-like endoprotease kex2. Cleavage by kex2 generates 11 peptides.

It is found in the secreted. Its function is as follows. Repetitive secreted protein essential for pathogenic development. Hum3 and rsp1 together are pathogenicity proteins that share an essential function in early stages of the infection. In Mycosarcoma maydis (Corn smut fungus), this protein is Repetitive secreted protein 1.